A 412-amino-acid polypeptide reads, in one-letter code: 1-deoxy-D-xylulose 5-phosphate reductoisomerase (412 aa).

Positions 5, 6, 7, 8, 31, 33, and 125 each coordinate NADPH. Lysine 126 is a binding site for 1-deoxy-D-xylulose 5-phosphate. Glutamate 127 lines the NADPH pocket. Mn(2+) is bound at residue aspartate 151. 1-deoxy-D-xylulose 5-phosphate is bound by residues serine 152, glutamate 153, serine 189, and histidine 212. Glutamate 153 lines the Mn(2+) pocket. Glycine 218 is an NADPH binding site. 4 residues coordinate 1-deoxy-D-xylulose 5-phosphate: serine 225, asparagine 230, lysine 231, and glutamate 234. A Mn(2+)-binding site is contributed by glutamate 234.

Belongs to the DXR family. The cofactor is Mg(2+). Requires Mn(2+) as cofactor.

It catalyses the reaction 2-C-methyl-D-erythritol 4-phosphate + NADP(+) = 1-deoxy-D-xylulose 5-phosphate + NADPH + H(+). It functions in the pathway isoprenoid biosynthesis; isopentenyl diphosphate biosynthesis via DXP pathway; isopentenyl diphosphate from 1-deoxy-D-xylulose 5-phosphate: step 1/6. Functionally, catalyzes the NADPH-dependent rearrangement and reduction of 1-deoxy-D-xylulose-5-phosphate (DXP) to 2-C-methyl-D-erythritol 4-phosphate (MEP). The chain is 1-deoxy-D-xylulose 5-phosphate reductoisomerase from Prochlorococcus marinus (strain MIT 9313).